The chain runs to 40 residues: MADTTGRIPLWIIGTVAGILVIGLVGVFFYGSYSGLGSSL.

The helical transmembrane segment at 8-28 (IPLWIIGTVAGILVIGLVGVF) threads the bilayer.

This sequence belongs to the PsbJ family. As to quaternary structure, PSII is composed of 1 copy each of membrane proteins PsbA, PsbB, PsbC, PsbD, PsbE, PsbF, PsbH, PsbI, PsbJ, PsbK, PsbL, PsbM, PsbT, PsbX, PsbY, PsbZ, Psb30/Ycf12, at least 3 peripheral proteins of the oxygen-evolving complex and a large number of cofactors. It forms dimeric complexes.

The protein localises to the plastid. The protein resides in the chloroplast thylakoid membrane. Functionally, one of the components of the core complex of photosystem II (PSII). PSII is a light-driven water:plastoquinone oxidoreductase that uses light energy to abstract electrons from H(2)O, generating O(2) and a proton gradient subsequently used for ATP formation. It consists of a core antenna complex that captures photons, and an electron transfer chain that converts photonic excitation into a charge separation. In Helianthus annuus (Common sunflower), this protein is Photosystem II reaction center protein J.